Reading from the N-terminus, the 323-residue chain is Forkhead transcription factor fkh-6 (323 aa).

Positions 21–122 (KPPYSYVALI…DNGNFKRRRV (102 aa)) form a DNA-binding region, fork-head.

The protein resides in the nucleus. Functionally, probable transcription factor. Binds to the DNA sequence motif 5'-[TA]TGTT[TG]T[TG][ATG]TT-3'. Regulates sexual dimorphism in the gonad, promoting male gonadal cell fates in chromosomally (XO) male animals, yet plays a role in gonadogenesis in both sexes; probably acts downstream of terminal regulator of sex determination tra-1, to control early gonadogenesis. Positively modulates expression of homeobox protein egl-5, probably acting indirectly, during early gonadal development. This is Forkhead transcription factor fkh-6 from Caenorhabditis elegans.